The primary structure comprises 77 residues: Acyl carrier protein (77 aa).

The Carrier domain maps to 1-76 (MADFEKVKSI…DVTKFIDNLK (76 aa)). An O-(pantetheine 4'-phosphoryl)serine modification is found at Ser-36.

It belongs to the acyl carrier protein (ACP) family. Post-translationally, 4'-phosphopantetheine is transferred from CoA to a specific serine of apo-ACP by AcpS. This modification is essential for activity because fatty acids are bound in thioester linkage to the sulfhydryl of the prosthetic group.

The protein resides in the cytoplasm. It functions in the pathway lipid metabolism; fatty acid biosynthesis. Its function is as follows. Carrier of the growing fatty acid chain in fatty acid biosynthesis. This chain is Acyl carrier protein, found in Leptospira borgpetersenii serovar Hardjo-bovis (strain JB197).